The following is a 338-amino-acid chain: Glycerol-3-phosphate dehydrogenase [NAD(P)+] (338 aa).

Residues S13, W14, and K108 each contribute to the NADPH site. The sn-glycerol 3-phosphate site is built by K108, G139, and S141. A143 serves as a coordination point for NADPH. Sn-glycerol 3-phosphate is bound by residues K194, D247, S257, R258, and N259. The active-site Proton acceptor is K194. Residue R258 coordinates NADPH. V282 and E284 together coordinate NADPH.

This sequence belongs to the NAD-dependent glycerol-3-phosphate dehydrogenase family.

It localises to the cytoplasm. It carries out the reaction sn-glycerol 3-phosphate + NAD(+) = dihydroxyacetone phosphate + NADH + H(+). The catalysed reaction is sn-glycerol 3-phosphate + NADP(+) = dihydroxyacetone phosphate + NADPH + H(+). The protein operates within membrane lipid metabolism; glycerophospholipid metabolism. Catalyzes the reduction of the glycolytic intermediate dihydroxyacetone phosphate (DHAP) to sn-glycerol 3-phosphate (G3P), the key precursor for phospholipid synthesis. In Streptococcus pneumoniae (strain Taiwan19F-14), this protein is Glycerol-3-phosphate dehydrogenase [NAD(P)+].